The sequence spans 135 residues: uncharacterized protein (135 aa).

Residues 4–129 (SIVHIALVVN…YGNLWDLLQL (126 aa)) form the VOC domain.

To B.subtilis YwkD.

This is an uncharacterized protein from Shewanella frigidimarina (strain NCIMB 400).